The primary structure comprises 825 residues: 5E5 antigen (825 aa).

Residues 126-825 are disordered; the sequence is LSRDGYETET…RPRPSPKSPR (700 aa). The span at 157–180 shows a compositional bias: pro residues; the sequence is PRAPPEPPDPGAPRPPPDPGPLPL. Residues 191–200 show a composition bias toward polar residues; that stretch reads VQVSTEQLLM. Positions 217 to 237 are enriched in basic and acidic residues; sequence TRGDRTQEGGEKPREQREGPR. Residues 247–256 are compositionally biased toward low complexity; the sequence is QQEESPQQEP. Basic and acidic residues-rich tracts occupy residues 257-277, 315-342, and 392-406; these read SSER…HEGE, VPKD…RDWT, and QERE…ESPR. Residues 437–449 show a composition bias toward basic residues; that stretch reads RRPRKRRGRKGRM. Over residues 455–477 the composition is skewed to low complexity; it reads TTATSASATGGPAEEAGASAPEG. Positions 485–505 are enriched in basic residues; it reads GRARGPRQQARRRHGPQRRRG. Over residues 524–536 the composition is skewed to polar residues; that stretch reads GTTSGEQRADQSQ. Over residues 537-562 the composition is skewed to low complexity; it reads TLPALAGAPTAHAHAVPGPGPAAATL. The segment covering 565–575 has biased composition (basic residues); the sequence is RGRRGSWRGGR. Gly residues predominate over residues 576 to 588; it reads RGGGAGASGGGRG. Residues 721–733 are compositionally biased toward pro residues; that stretch reads FPPPPPTRPPPVL. A compositionally biased stretch (low complexity) spans 734–750; that stretch reads LPLLRLTCAGDPGASRP.

As to expression, expressed in neurons.

It localises to the nucleus. Might have DNA-binding ability. This chain is 5E5 antigen, found in Rattus norvegicus (Rat).